Reading from the N-terminus, the 181-residue chain is Large ribosomal subunit protein uL5 (181 aa).

It belongs to the universal ribosomal protein uL5 family. In terms of assembly, part of the 50S ribosomal subunit; part of the 5S rRNA/L5/L18/L25 subcomplex. Contacts the 5S rRNA and the P site tRNA. Forms a bridge to the 30S subunit in the 70S ribosome.

Its function is as follows. This is one of the proteins that bind and probably mediate the attachment of the 5S RNA into the large ribosomal subunit, where it forms part of the central protuberance. In the 70S ribosome it contacts protein S13 of the 30S subunit (bridge B1b), connecting the 2 subunits; this bridge is implicated in subunit movement. Contacts the P site tRNA; the 5S rRNA and some of its associated proteins might help stabilize positioning of ribosome-bound tRNAs. This is Large ribosomal subunit protein uL5 from Helicobacter pylori (strain ATCC 700392 / 26695) (Campylobacter pylori).